Here is a 2497-residue protein sequence, read N- to C-terminus: Integrator complex subunit 1 homolog (2497 aa).

A compositionally biased stretch (basic residues) spans 1–10 (MMLNKIKRSK). Disordered regions lie at residues 1 to 151 (MMLN…NNNI), 300 to 337 (QPQP…IKKS), 946 to 965 (QQQQ…QQPT), 1028 to 1108 (TTTT…TSSS), 1234 to 1292 (INNN…NQKS), and 1572 to 1604 (NNNN…NNIT). 5 stretches are compositionally biased toward low complexity: residues 37–46 (SDNNNNNSND), 60–151 (NNSI…NNNI), 305–333 (QQQQ…QPQQ), 946–963 (QQQQ…QQQQ), and 1028–1058 (TTTT…SSSL). Polar residues predominate over residues 1075 to 1091 (SGLSGSSNGINQSSDSI). 4 stretches are compositionally biased toward low complexity: residues 1097 to 1108 (STSPTTTTTSSS), 1234 to 1265 (INNN…NINK), 1272 to 1289 (HSNS…NKNN), and 1572 to 1602 (NNNN…NNNN). The stretch at 1645–1675 (RILKNTTQQKQQKQQQKESVQKSIQSLSKLI) forms a coiled coil. Residues 2084–2115 (QQQQQQQQQQQQQQKQQSNNSNNINNNNNNNN) show a composition bias toward low complexity. 2 disordered regions span residues 2084–2123 (QQQQ…QKSK) and 2329–2350 (NNNN…NNNN).

The protein belongs to the Integrator subunit 1 family. Component of the Integrator complex. The core complex associates with protein phosphatase 2A subunits to form the Integrator-PP2A (INTAC) complex.

Its subcellular location is the nucleus. Component of the integrator complex, a multiprotein complex that terminates RNA polymerase II (Pol II) transcription in the promoter-proximal region of genes. The integrator complex provides a quality checkpoint during transcription elongation by driving premature transcription termination of transcripts that are unfavorably configured for transcriptional elongation: the complex terminates transcription by (1) catalyzing dephosphorylation of the C-terminal domain (CTD) of Pol II subunit polr2a, (2) degrading the exiting nascent RNA transcript via endonuclease activity and (3) promoting the release of Pol II from bound DNA. The integrator complex is also involved in terminating the synthesis of non-coding Pol II transcripts, such as enhancer RNAs (eRNAs), small nuclear RNAs (snRNAs), telomerase RNAs and long non-coding RNAs (lncRNAs). This chain is Integrator complex subunit 1 homolog (ints1), found in Dictyostelium discoideum (Social amoeba).